The primary structure comprises 197 residues: Peptide deformylase (197 aa).

Residues cysteine 106 and histidine 148 each coordinate Fe cation. Residue glutamate 149 is part of the active site. A Fe cation-binding site is contributed by histidine 152.

This sequence belongs to the polypeptide deformylase family. The cofactor is Fe(2+).

The catalysed reaction is N-terminal N-formyl-L-methionyl-[peptide] + H2O = N-terminal L-methionyl-[peptide] + formate. In terms of biological role, removes the formyl group from the N-terminal Met of newly synthesized proteins. Requires at least a dipeptide for an efficient rate of reaction. N-terminal L-methionine is a prerequisite for activity but the enzyme has broad specificity at other positions. The chain is Peptide deformylase from Mycolicibacterium vanbaalenii (strain DSM 7251 / JCM 13017 / BCRC 16820 / KCTC 9966 / NRRL B-24157 / PYR-1) (Mycobacterium vanbaalenii).